The following is a 1071-amino-acid chain: ATP-dependent helicase/deoxyribonuclease subunit B (1071 aa).

This sequence belongs to the helicase family. AddB/RexB type 2 subfamily. In terms of assembly, heterodimer of AddA and RexB. Mg(2+) serves as cofactor.

Functionally, the heterodimer acts as both an ATP-dependent DNA helicase and an ATP-dependent, dual-direction single-stranded exonuclease. Recognizes the chi site generating a DNA molecule suitable for the initiation of homologous recombination. This subunit has 5' -&gt; 3' nuclease activity but not helicase activity. The polypeptide is ATP-dependent helicase/deoxyribonuclease subunit B (Streptococcus pyogenes serotype M18 (strain MGAS8232)).